Here is a 332-residue protein sequence, read N- to C-terminus: Glyceraldehyde-3-phosphate dehydrogenase 2 (332 aa).

NAD(+) contacts are provided by Arg-11, Ile-12, and Asp-33. Residues Lys-46 and Lys-63 each participate in a glycyl lysine isopeptide (Lys-Gly) (interchain with G-Cter in ubiquitin) cross-link. Thr-120 lines the NAD(+) pocket. Residues 149 to 151, Thr-180, 209 to 210, and Arg-232 each bind D-glyceraldehyde 3-phosphate; these read SCT and TG. Residue Cys-150 is the Nucleophile of the active site. Residue Ser-302 is modified to Phosphoserine. Residues Asn-314 and Tyr-318 each coordinate NAD(+).

This sequence belongs to the glyceraldehyde-3-phosphate dehydrogenase family. In terms of assembly, homotetramer.

The protein localises to the cytoplasm. It carries out the reaction D-glyceraldehyde 3-phosphate + phosphate + NAD(+) = (2R)-3-phospho-glyceroyl phosphate + NADH + H(+). The catalysed reaction is NADH + H2O = (6R)-NADHX. It catalyses the reaction NADH + H2O = (6S)-NADHX. The enzyme catalyses NADPH + H2O = (6R)-NADPHX. It carries out the reaction NADPH + H2O = (6S)-NADPHX. It participates in carbohydrate degradation; glycolysis; pyruvate from D-glyceraldehyde 3-phosphate: step 1/5. In terms of biological role, glyceraldehyde-3-phosphate dehydrogenase (GAPDH) involved in glycolysis and gluconeogenesis. Catalyzes the reaction of glyceraldehyde-3-phosphate to 1,3 bis-phosphoglycerate. The contribution of the TDH1, TDH2, and TDH3 to the total glyceraldehyde-3-phosphate dehydrogenase activity is 10-15, 25-30, and 50-60%, respectively. Functionally, as a side activity, catalyzes the hydration of the nicotinamide ring of NADH or NADPH at the C6 position to give the corresponding hydrates, NADHX and NADPHX, which exist as R and S epimers, that cannot act as electron donors or acceptors and inhibit several dehydrogenases, making them toxic. In Saccharomyces cerevisiae (strain ATCC 204508 / S288c) (Baker's yeast), this protein is Glyceraldehyde-3-phosphate dehydrogenase 2.